Reading from the N-terminus, the 335-residue chain is D-arabinose 1-dehydrogenase (335 aa).

Residue Tyr-58 is the Proton donor of the active site. His-124 serves as a coordination point for substrate. 221 to 287 (SLLRSQETRQ…VSSMEELKLA (67 aa)) is an NAD(+) binding site.

The protein belongs to the aldo/keto reductase family. Aldo/keto reductase 2 subfamily.

It catalyses the reaction D-arabinose + NAD(+) = D-arabinono-1,4-lactone + NADH + H(+). This Saccharomyces cerevisiae (strain ATCC 204508 / S288c) (Baker's yeast) protein is D-arabinose 1-dehydrogenase (ARA2).